The chain runs to 65 residues: ATP synthase F(0) complex subunit 8 (65 aa).

A helical transmembrane segment spans residues 8–24 (TWLTTILSMFLALFIIF). An N6-acetyllysine; alternate modification is found at Lys-53. Lys-53 bears the N6-succinyllysine; alternate mark. Lys-56 is subject to N6-acetyllysine.

It belongs to the ATPase protein 8 family. In terms of assembly, component of the ATP synthase complex composed at least of ATP5F1A/subunit alpha, ATP5F1B/subunit beta, ATP5MC1/subunit c (homooctomer), MT-ATP6/subunit a, MT-ATP8/subunit 8, ATP5ME/subunit e, ATP5MF/subunit f, ATP5MG/subunit g, ATP5MK/subunit k, ATP5MJ/subunit j, ATP5F1C/subunit gamma, ATP5F1D/subunit delta, ATP5F1E/subunit epsilon, ATP5PF/subunit F6, ATP5PB/subunit b, ATP5PD/subunit d, ATP5PO/subunit OSCP. ATP synthase complex consists of a soluble F(1) head domain (subunits alpha(3) and beta(3)) - the catalytic core - and a membrane F(0) domain - the membrane proton channel (subunits c, a, 8, e, f, g, k and j). These two domains are linked by a central stalk (subunits gamma, delta, and epsilon) rotating inside the F1 region and a stationary peripheral stalk (subunits F6, b, d, and OSCP). Interacts with PRICKLE3.

It localises to the mitochondrion membrane. In terms of biological role, subunit 8, of the mitochondrial membrane ATP synthase complex (F(1)F(0) ATP synthase or Complex V) that produces ATP from ADP in the presence of a proton gradient across the membrane which is generated by electron transport complexes of the respiratory chain. ATP synthase complex consist of a soluble F(1) head domain - the catalytic core - and a membrane F(1) domain - the membrane proton channel. These two domains are linked by a central stalk rotating inside the F(1) region and a stationary peripheral stalk. During catalysis, ATP synthesis in the catalytic domain of F(1) is coupled via a rotary mechanism of the central stalk subunits to proton translocation. In vivo, can only synthesize ATP although its ATP hydrolase activity can be activated artificially in vitro. Part of the complex F(0) domain. This chain is ATP synthase F(0) complex subunit 8, found in Capra ibex ibex (Alpine ibex).